Consider the following 293-residue polypeptide: D-psicose 3-epimerase (293 aa).

Tyrosine 6 and alanine 107 together coordinate substrate. The Proton donor/acceptor role is filled by glutamate 150. Glutamate 150 is a Mn(2+) binding site. Substrate-binding positions include glutamate 156 and 183 to 186 (DTFH). Positions 183 and 209 each coordinate Mn(2+). Residue arginine 215 coordinates substrate. The Proton donor/acceptor role is filled by glutamate 244. Glutamate 244 provides a ligand contact to Mn(2+).

Belongs to the hyi family. Homotetramer. Requires Mn(2+) as cofactor. It depends on Co(2+) as a cofactor.

It catalyses the reaction D-allulose = keto-D-fructose. Its function is as follows. Involved in the biosynthesis of D-psicose. Catalyzes the reversible epimerization of D-fructose at the C3 position to yield D-psicose. The enzyme is highly specific for D-psicose and shows very low activity with D-tagatose. The protein is D-psicose 3-epimerase of Ruminiclostridium cellulolyticum (strain ATCC 35319 / DSM 5812 / JCM 6584 / H10) (Clostridium cellulolyticum).